A 992-amino-acid chain; its full sequence is MVMRTRPLAAMAVRSCFSALTGTVYLLLVLCEVSWAQIFSFPFQRPETCDLNQYFDISALSCAPCGANQRRDALGTSCICLPGYHMISNNGGPSIICKKCPENMKGVTKDGWDCISCPNGLTAEGKCHCPSGHILVERNVSGSLLSQATCELCDGNENSFTKPNALGTRCVRCEPTFVNTSRSCSCSEPHISTGGLCFSNTGNFPQRLISTERYGELGMSSNSEWFTKYLQATAAACWTHSNLTSCQALGNMCVMNMNSYDSTTFDACRLFHYVFEGAAGLTGVHSVPFWRQNLPWLFYGDQPGLASQVLSTTPLPTNFSFKGQNQLKFVAASYDIRGNFIRWQTVKGGVLQLCPDTERRLDAAYSFGTTYQQNCEISLSKLLADFPSPVFYDIYLEYTDEVQHHYLWAIPVLNLNLQHNKLFVNQDSSSSKWLLTRRIFLVDAVSGRENDLGNQPRVIRVATQISLSIRLVPNTKNGNIYTPLLTIAYSDIDIKNAYSQSVKISFSVKYEMNQGDAFVQTDIALGVLGGLAVLSSLLKTAGWKRRIGSPMIDLQTVMKFLLYYAGDLANVFFIITVGTGLYWLIFFKAQKSVSVLLPMPVQEERFVTYVGCAFAMKALQFLHKLISQITIDIFFIDWERPKGKVLKAVEGEGGVRSATVPVSIWRTYFVANEWNEIQTVRKINPLFQVLTTLFFLEVVGFKNLALMDPSSSLSRSLSDYAAPYSRILRYAVATTIWLVIGIVQVVFFAAFYERFIEDKIRQFVDLCSMSNVSVFLLSHRCFGYYIHGRSVHGHADTNMEDMNMNLRREAENLCSQRGLVPNTDGQTFQIAVSSQMRQHYDRIHETLTRRNGPARLLSSSGSTLEQSIKAYHAMNKFLGSFIDHVHKEMDYFIKDKLLLEKILGMEFMEPLEKSIFYNDESHSFSSVLYYGNEATLLIFDLLFFCVVDLACQNFVLASFLTYLQQEIFRFIRNTVGQKNLATKTLVDERFLI.

The signal sequence occupies residues Met-1–Trp-35. Residues Ala-36–Asp-516 lie on the Extracellular side of the membrane. The tract at residues Gln-37–Gly-280 is cysteine-rich. Disulfide bonds link Cys-49-Cys-62, Cys-65-Cys-78, Cys-80-Cys-97, Cys-100-Cys-114, Cys-117-Cys-127, Cys-129-Cys-150, Cys-153-Cys-170, Cys-173-Cys-184, Cys-186-Cys-197, Cys-237-Cys-246, Cys-253-Cys-268, and Cys-354-Cys-375. An N-linked (GlcNAc...) asparagine glycan is attached at Asn-242. The chain crosses the membrane as a helical span at residues Ala-517–Arg-545. The Cytoplasmic portion of the chain corresponds to Arg-546–Gln-555. Residues Thr-556 to Phe-587 traverse the membrane as a helical segment. The Extracellular segment spans residues Lys-588–Pro-600. Residues Val-601 to Gln-628 form a helical membrane-spanning segment. Over Ile-629–Thr-667 the chain is Cytoplasmic. An intramembrane region (helical) is located at residues Tyr-668–Glu-676. A discontinuously helical transmembrane segment spans residues Tyr-668–Val-698. Residues Ile-677 to Pro-685 lie within the membrane without spanning it. An intramembrane region (helical) is located at residues Leu-686–Val-698. Residues Val-699–Leu-728 lie on the Extracellular side of the membrane. Residues Arg-729–Arg-754 constitute an intramembrane region (helical). The chain crosses the membrane as a discontinuously helical span at residues Arg-729–Ser-768. Residues Phe-755 to Lys-759 lie within the membrane without spanning it. Residues Ile-760–Ser-768 constitute an intramembrane region (helical). Over Met-769–Ser-923 the chain is Cytoplasmic. Positions Phe-924–Ser-926 form an intramembrane region, helical. The discontinuously helical transmembrane segment at Phe-924–Leu-949 threads the bilayer. The stretch at Val-927–Glu-933 is an intramembrane region. The segment at residues Ala-934–Leu-949 is an intramembrane region (helical). The Extracellular segment spans residues Ala-950 to Phe-954. A helical membrane pass occupies residues Val-955–Thr-982. At Lys-983–Ile-992 the chain is on the cytoplasmic side.

In terms of assembly, homodimer. Part of the tectonic-like complex (also named B9 complex). Interacts with DNAJB9, DNAJC10 and mutated SFTPC. Interacts with SYNE2 during the early establishment of cell polarity. Interacts (via C-terminus) with FLNA. Interacts with TMEM218. Interacts with WNT5A. Interacts with ROR2.

The protein resides in the cell membrane. It localises to the endoplasmic reticulum membrane. The protein localises to the cytoplasm. It is found in the cytoskeleton. Its subcellular location is the cilium basal body. Part of the tectonic-like complex which is required for tissue-specific ciliogenesis and may regulate ciliary membrane composition. Involved in centrosome migration to the apical cell surface during early ciliogenesis. Required for ciliary structure and function, including a role in regulating length and appropriate number through modulating centrosome duplication. Is a key regulator of stereociliary bundle orientation. Required for epithelial cell branching morphology. Essential for endoplasmic reticulum-associated degradation (ERAD) of surfactant protein C (sftpc). Involved in the negative regulation of canonical Wnt signaling, and activation of the non-canonical cascade stimulated by WNT5A. In non-canonical Wnt signaling, it may act as ROR2 coreceptor. This Rattus norvegicus (Rat) protein is Meckelin (Tmem67).